The primary structure comprises 319 residues: Pyrroline-5-carboxylate reductase 1, mitochondrial (319 aa).

Ser-2 is subject to N-acetylserine. NADP(+) is bound by residues 6 to 11 and Ser-34; that span reads IGAGQL. NADPH is bound by residues Ala-8, Gln-10, Leu-11, Ser-34, Asp-36, Asn-56, Val-70, Lys-71, and Ala-97. NADP(+) contacts are provided by residues Asn-56, 69–72, and 95–97; these read AVKP and CAA. Glu-164 is an L-proline binding site. NADPH is bound at residue Asn-230. L-proline-binding residues include Ala-237 and Thr-238. Residues Ser-278 and Ser-301 each carry the phosphoserine modification. The disordered stretch occupies residues 294–319; sequence SPAGTALSPSGHTKLLPRSLAPAGKD.

This sequence belongs to the pyrroline-5-carboxylate reductase family. As to quaternary structure, homodecamer; composed of 5 homodimers. Interacts with LTO1.

Its subcellular location is the mitochondrion. It carries out the reaction L-proline + NADP(+) = (S)-1-pyrroline-5-carboxylate + NADPH + 2 H(+). The catalysed reaction is L-proline + NAD(+) = (S)-1-pyrroline-5-carboxylate + NADH + 2 H(+). It functions in the pathway amino-acid biosynthesis; L-proline biosynthesis; L-proline from L-glutamate 5-semialdehyde: step 1/1. With respect to regulation, subject to competitive inhibition by the reaction product proline. Subject to competitive inhibition by stearoyl coenzyme A. Functionally, oxidoreductase that catalyzes the last step in proline biosynthesis, which corresponds to the reduction of pyrroline-5-carboxylate to L-proline using NAD(P)H. At physiologic concentrations, has higher specific activity in the presence of NADH. Involved in the cellular response to oxidative stress. The sequence is that of Pyrroline-5-carboxylate reductase 1, mitochondrial from Homo sapiens (Human).